We begin with the raw amino-acid sequence, 904 residues long: Envelope glycoprotein B (904 aa).

Positions 1 to 30 are cleaved as a signal peptide; sequence MRQGAPARGCRWFVVWALLGLTLGVLVASA. The span at 31–65 shows a compositional bias: low complexity; the sequence is APSSPGTPGVAAATQAANGGPATPAPPALGAAPTG. A disordered region spans residues 31–88; sequence APSSPGTPGVAAATQAANGGPATPAPPALGAAPTGDPKPKKNKKPKNPTPPRPAGDNA. At 31 to 774 the chain is on the virion surface side; it reads APSSPGTPGV…SGVSSFMSNP (744 aa). N-linked (GlcNAc...) asparagine; by host glycans are attached at residues N87 and N141. Disulfide bonds link C116–C573, C133–C529, C207–C271, C364–C412, and C596–C633. 2 involved in fusion and/or binding to host membrane regions span residues 173-179 and 258-265; these read VWFGHRY and RVEAFHRY. N-linked (GlcNAc...) asparagine; by host glycans are attached at residues N398 and N430. Positions 470 to 492 are disordered; sequence REQSRKPPNPTPPPPGASANASV. A compositionally biased stretch (pro residues) spans 476–485; the sequence is PPNPTPPPPG. N489 carries N-linked (GlcNAc...) asparagine; by host glycosylation. N-linked (GlcNAc...) asparagine; by host glycosylation occurs at N674. Positions 719-772 are hydrophobic membrane proximal region; it reads IDTVIHADANAAMFAGLGAFFEGMGDLGRAVGKVVMGIVGGVVSAVSGVSSFMS. Residues 775–795 form a helical membrane-spanning segment; sequence FGALAVGLLVLAGLAAAFFAF. Over 796-904 the chain is Intravirion; it reads RYVMRLQSNP…KDGDADEDDL (109 aa). Residues 849-852 carry the Golgi targeting motif; that stretch reads YMAL. The interval 883–904 is disordered; sequence KRRNTNYTQVPNKDGDADEDDL. The Internalization motif signature appears at 889–892; that stretch reads YTQV.

Belongs to the herpesviridae glycoprotein B family. Homotrimer; disulfide-linked. Interacts with host receptor MYH9/NMMHC-IIA. Interacts with host receptor MYH10/NMMHC-IIB. Binds to heparan sulfate proteoglycans. Interacts with gH/gL heterodimer. In terms of processing, the cytoplasmic tail is phosphorylated by the viral kinase US3. Phosphorylation may be linked to a down-regulation of gB expression on cell surface. Post-translationally, ubiquitinated.

It is found in the virion membrane. The protein resides in the host cell membrane. The protein localises to the host endosome membrane. Its subcellular location is the host Golgi apparatus membrane. Its function is as follows. Envelope glycoprotein that forms spikes at the surface of virion envelope and binds to the host cell entry receptors MYH9/NMMHC-IIA and MYH10/NMMHC-IIB, promoting the virus entry into host cells. Essential for the initial attachment to heparan sulfate moieties of the host cell surface proteoglycans. Involved in fusion of viral and cellular membranes leading to virus entry into the host cell: following initial binding to its host cell entry receptors, membrane fusion is mediated by the fusion machinery composed at least of gB and the heterodimer gH/gL. May be involved in the fusion between the virion envelope and the outer nuclear membrane during virion egress. Also plays a role, together with gK, in virus-induced cell-to-cell fusion (syncytia formation). The protein is Envelope glycoprotein B of Homo sapiens (Human).